A 1097-amino-acid chain; its full sequence is Apolipoprotein B receptor (1097 aa).

Disordered regions lie at residues 64–249 (QEDL…KGEE), 262–376 (AWGT…WTTS), 410–739 (EEEG…SRRG), 789–866 (GWDS…ARAE), and 889–1097 (VGWQ…PKPQ). Composition is skewed to basic and acidic residues over residues 83–92 (GPGDDRRHEV), 158–177 (ERQESHEQEVNREERLRSWE), and 185–208 (VRAREPGMARGAESEWTWHGETEG). Over residues 209–218 (KAGAVGPKAA) the composition is skewed to low complexity. Composition is skewed to basic and acidic residues over residues 219–232 (GDNREMEQGVREAD) and 279–302 (GREEARTTPGREEARAILDGEEAR). Over residues 312-330 (TASGGEEAETASGGEEAGT) the composition is skewed to low complexity. Over residues 331–362 (ASGGEEAGIASGGEAGTASGGEEAGTASGGEE) the composition is skewed to gly residues. Serine 458 carries the phosphoserine modification. Basic and acidic residues-rich tracts occupy residues 463–487 (VDLRGKEAEMRQDLGIRADRARMEE) and 496–505 (EERGSSRDPV). Serine 510 bears the Phosphoserine mark. Residue threonine 572 is modified to Phosphothreonine. Phosphoserine is present on serine 594. Composition is skewed to basic and acidic residues over residues 594–606 (SKEEQERSLEAGP) and 626–637 (NRTRKDMERGNT). Acidic residues predominate over residues 640–652 (DAADGEQREEEET). Composition is skewed to basic and acidic residues over residues 791 to 800 (DSKEKEEAAA), 892 to 918 (QEREQREDSEGRCGDYHPEGEAPRLLD), and 928 to 950 (RRAEAKETEPESLEHVRGQEEQP). The span at 1000–1017 (SRVHLSRSSSQRRSRPSF) shows a compositional bias: basic residues. The segment covering 1041 to 1050 (APEQRPLQLE) has biased composition (low complexity).

Homodimer. There are 2 forms in macrophages, the membrane-binding proteins 200 kDa (MBP 200) and 235 kDa (MBP 235), that can be reduced into a single active ligand-binding species with intermediate mobility (MBP 200R). Expressed in peripheral blood leukocytes &gt; bone marrow = spleen &gt; lymph node, and only faintly visible in appendix and thymus. Expressed in the brain, heart, kidney, liver, lung, pancreas, and placenta. Expressed primarily by reticuloendothelial cells: monocytes, macrophages, and endothelial cells. Expressed in atherosclerotic lesion foam cells.

The protein resides in the cell membrane. In terms of biological role, macrophage receptor that binds to the apolipoprotein B48 (APOB) of dietary triglyceride (TG)-rich lipoproteins (TRL) or to a like domain of APOB in hypertriglyceridemic very low density lipoprotein (HTG-VLDL). Binds and internalizes TRL when out of the context of the macrophage. May provide essential lipids to reticuloendothelial cells. Could also be involved in foam cell formation with elevated TRL and remnant lipoprotein (RLP). Mediates the rapid high-affinity uptake of chylomicrons (CM), HTG-VLDL, and trypsinized (tryp) VLDL devoid of APOE in vitro in macrophages. This is Apolipoprotein B receptor from Homo sapiens (Human).